Reading from the N-terminus, the 432-residue chain is Glutamyl-tRNA reductase (432 aa).

Residues 49–52, S101, 106–108, and Q112 each bind substrate; these read TCNR and ESQ. The active-site Nucleophile is the C50. 181–186 contacts NADP(+); it reads GTGETI.

This sequence belongs to the glutamyl-tRNA reductase family. As to quaternary structure, homodimer.

It catalyses the reaction (S)-4-amino-5-oxopentanoate + tRNA(Glu) + NADP(+) = L-glutamyl-tRNA(Glu) + NADPH + H(+). It participates in porphyrin-containing compound metabolism; protoporphyrin-IX biosynthesis; 5-aminolevulinate from L-glutamyl-tRNA(Glu): step 1/2. Catalyzes the NADPH-dependent reduction of glutamyl-tRNA(Glu) to glutamate 1-semialdehyde (GSA). The sequence is that of Glutamyl-tRNA reductase from Xylella fastidiosa (strain M12).